The sequence spans 174 residues: Large ribosomal subunit protein uL18 (174 aa).

The protein belongs to the universal ribosomal protein uL18 family. In terms of assembly, part of the 50S ribosomal subunit. Contacts the 5S and 23S rRNAs.

Functionally, this is one of the proteins that bind and probably mediate the attachment of the 5S RNA into the large ribosomal subunit, where it forms part of the central protuberance. In Methanoregula boonei (strain DSM 21154 / JCM 14090 / 6A8), this protein is Large ribosomal subunit protein uL18.